The following is a 348-amino-acid chain: Caricain (348 aa).

The N-terminal stretch at 1 to 16 (MAMIPSISKLLFVAIC) is a signal peptide. Positions 17–132 (LFVHMSVSFG…EEFINEDTVN (116 aa)) are cleaved as a propeptide — activation peptide. A glycan (N-linked (GlcNAc...) asparagine) is linked at asparagine 86. 3 disulfide bridges follow: cysteine 154–cysteine 195, cysteine 188–cysteine 227, and cysteine 285–cysteine 336. Cysteine 157 is a catalytic residue. Cysteine 157 is a binding site for E64. Residues histidine 291 and asparagine 311 contribute to the active site.

The protein belongs to the peptidase C1 family. Monomer.

The catalysed reaction is Hydrolysis of proteins with broad specificity for peptide bonds, similar to those of papain and chymopapain.. Repressed by the active-site-directed cysteine protease inhibitor E64 (L-trans-epoxysuccinyl-leucylamide-(4-guanido)-butane) produced by Aspergillus japonicus. Cysteine proteinase with a high level of diversity in substrate specificity. The chain is Caricain from Carica papaya (Papaya).